The following is a 123-amino-acid chain: Small ribosomal subunit protein uS12 (123 aa).

Asp89 bears the 3-methylthioaspartic acid mark.

This sequence belongs to the universal ribosomal protein uS12 family. In terms of assembly, part of the 30S ribosomal subunit. Contacts proteins S8 and S17. May interact with IF1 in the 30S initiation complex.

Its function is as follows. With S4 and S5 plays an important role in translational accuracy. In terms of biological role, interacts with and stabilizes bases of the 16S rRNA that are involved in tRNA selection in the A site and with the mRNA backbone. Located at the interface of the 30S and 50S subunits, it traverses the body of the 30S subunit contacting proteins on the other side and probably holding the rRNA structure together. The combined cluster of proteins S8, S12 and S17 appears to hold together the shoulder and platform of the 30S subunit. This chain is Small ribosomal subunit protein uS12, found in Prochlorococcus marinus (strain MIT 9211).